A 140-amino-acid polypeptide reads, in one-letter code: Small ribosomal subunit protein uS19 (140 aa).

The tract at residues 120 to 140 (RPKHSAPGIGATRSSAHVSKK) is disordered. Residues 131–140 (TRSSAHVSKK) are compositionally biased toward polar residues.

The protein belongs to the universal ribosomal protein uS19 family.

In terms of biological role, protein S19 forms a complex with S13 that binds strongly to the 16S ribosomal RNA. The protein is Small ribosomal subunit protein uS19 of Nanoarchaeum equitans (strain Kin4-M).